The chain runs to 347 residues: MTFSVAVAGASGYAGGELLRILADHPDFDIRTVTAHQNAGQPLAAHQPHLRSLAGLTLSESTAENLAGHDVVFLALPHGKSGEIATQLPADTLVVDCGADHRLEDPDAWAAFYGGEHFGSWAYGVPELPVGAGRQRERLAGAKRIAAPGCNASAVSLALAPGIHAGLIEDADIVSVLAVGPSGAGKALKTMYLASEILGSANPYAVGGTHRHIPEIQQSLRKAGALSPTISFIPVLVPMSRGILATSTARVKPGVSAAQVQAAWEETYAGEPFVQVLPAGSVPRTSDVLGANTALIGVALDAAAGRVVAVLAIDNLYKGTAGAAIQSANIALGLAETAGLSVNGVAP.

The active site involves C150.

Belongs to the NAGSA dehydrogenase family. Type 1 subfamily.

Its subcellular location is the cytoplasm. It carries out the reaction N-acetyl-L-glutamate 5-semialdehyde + phosphate + NADP(+) = N-acetyl-L-glutamyl 5-phosphate + NADPH + H(+). It participates in amino-acid biosynthesis; L-arginine biosynthesis; N(2)-acetyl-L-ornithine from L-glutamate: step 3/4. In terms of biological role, catalyzes the NADPH-dependent reduction of N-acetyl-5-glutamyl phosphate to yield N-acetyl-L-glutamate 5-semialdehyde. In Leifsonia xyli subsp. xyli (strain CTCB07), this protein is N-acetyl-gamma-glutamyl-phosphate reductase.